A 400-amino-acid polypeptide reads, in one-letter code: Aspartate aminotransferase (400 aa).

L-aspartate is bound by residues Gly-42 and Asn-180. The residue at position 241 (Lys-241) is an N6-(pyridoxal phosphate)lysine. Residue Arg-373 coordinates L-aspartate.

This sequence belongs to the class-I pyridoxal-phosphate-dependent aminotransferase family. In terms of assembly, homodimer. Pyridoxal 5'-phosphate is required as a cofactor.

The protein resides in the cytoplasm. The catalysed reaction is L-aspartate + 2-oxoglutarate = oxaloacetate + L-glutamate. The chain is Aspartate aminotransferase (aspC) from Sulfolobus acidocaldarius (strain ATCC 33909 / DSM 639 / JCM 8929 / NBRC 15157 / NCIMB 11770).